The chain runs to 549 residues: Alanine aminotransferase 2-like (549 aa).

N6-(pyridoxal phosphate)lysine is present on K367.

This sequence belongs to the class-I pyridoxal-phosphate-dependent aminotransferase family. Alanine aminotransferase subfamily. In terms of assembly, homodimer. Pyridoxal 5'-phosphate serves as cofactor.

It carries out the reaction L-alanine + 2-oxoglutarate = pyruvate + L-glutamate. Its pathway is amino-acid degradation; L-alanine degradation via transaminase pathway; pyruvate from L-alanine: step 1/1. Its function is as follows. Catalyzes the reversible transamination between alanine and 2-oxoglutarate to form pyruvate and glutamate. The chain is Alanine aminotransferase 2-like (gpt2l) from Danio rerio (Zebrafish).